The sequence spans 307 residues: Agmatinase (307 aa).

Residues histidine 128, aspartate 151, histidine 153, aspartate 155, aspartate 232, and aspartate 234 each contribute to the Mn(2+) site.

This sequence belongs to the arginase family. Agmatinase subfamily. Mn(2+) serves as cofactor.

It catalyses the reaction agmatine + H2O = urea + putrescine. It participates in amine and polyamine biosynthesis; putrescine biosynthesis via agmatine pathway; putrescine from agmatine: step 1/1. Functionally, catalyzes the formation of putrescine from agmatine. The sequence is that of Agmatinase from Photorhabdus laumondii subsp. laumondii (strain DSM 15139 / CIP 105565 / TT01) (Photorhabdus luminescens subsp. laumondii).